Here is a 74-residue protein sequence, read N- to C-terminus: UPF0435 protein GWCH70_0415 (74 aa).

This sequence belongs to the UPF0435 family.

The polypeptide is UPF0435 protein GWCH70_0415 (Geobacillus sp. (strain WCH70)).